The primary structure comprises 138 residues: Cytosolic calcium-binding protein 2 (138 aa).

Residues 31–41 (TEVTQQPEESV) show a composition bias toward low complexity. Residues 31–122 (TEVTQQPEES…KKTEVVEEKQ (92 aa)) are disordered. 6 consecutive repeat copies span residues 62-68 (VEEAEKK), 71-75 (ETEKK), 92-98 (VEEEEKK), 109-114 (VEEEKK), 118-122 (VEEKQ), and 131-135 (VAVEK). Residues 62-135 (VEEAEKKDEE…AAAEEVAVEK (74 aa)) form a 6 X 5 AA approximate repeats of V-E-E-K-K region. The span at 64–85 (EAEKKDEETEKKTEEKDEKTEV) shows a compositional bias: basic and acidic residues. The span at 110-122 (EEEKKTEVVEEKQ) shows a compositional bias: basic and acidic residues.

In terms of tissue distribution, predominantly expressed in roots (e.g. in endodermis in the stele) and stems, to a lower extent in shoots, flowers and siliques, and, at low levels, in leaves.

Its subcellular location is the cytoplasm. The protein resides in the cytosol. Binds calcium Ca(2+) and may act as a signal mediator to buffer Ca(2+). In Arabidopsis thaliana (Mouse-ear cress), this protein is Cytosolic calcium-binding protein 2.